Consider the following 188-residue polypeptide: MTNIAIFASGSGSNFENIVKHIQTGQLSGINVTALYTDNEGVPCIDRAKNLNIPIHINKPKDFSSKSLYEQHLLKLLSSEEVQWIVLAGYMRLVGQDLLQAYEGRILNIHPSLLPKFKGLDAIGQALESGDTVTGSTVHYVDSGMDTGEIIEQQQCDIKPDDTKEQLEDRVKHLEYELYPRVIAKIIK.

A N(1)-(5-phospho-beta-D-ribosyl)glycinamide-binding site is contributed by 12-14 (GSN). Residues K66, 91–94 (MRLV), and N108 each bind (6R)-10-formyltetrahydrofolate. The active-site Proton donor is the H110.

It belongs to the GART family.

It carries out the reaction N(1)-(5-phospho-beta-D-ribosyl)glycinamide + (6R)-10-formyltetrahydrofolate = N(2)-formyl-N(1)-(5-phospho-beta-D-ribosyl)glycinamide + (6S)-5,6,7,8-tetrahydrofolate + H(+). It participates in purine metabolism; IMP biosynthesis via de novo pathway; N(2)-formyl-N(1)-(5-phospho-D-ribosyl)glycinamide from N(1)-(5-phospho-D-ribosyl)glycinamide (10-formyl THF route): step 1/1. Its function is as follows. Catalyzes the transfer of a formyl group from 10-formyltetrahydrofolate to 5-phospho-ribosyl-glycinamide (GAR), producing 5-phospho-ribosyl-N-formylglycinamide (FGAR) and tetrahydrofolate. The sequence is that of Phosphoribosylglycinamide formyltransferase from Staphylococcus epidermidis (strain ATCC 35984 / DSM 28319 / BCRC 17069 / CCUG 31568 / BM 3577 / RP62A).